Consider the following 352-residue polypeptide: Isoflavone-7-O-methyltransferase 8 (352 aa).

Val118–Tyr127 is a binding site for substrate. 5 residues coordinate S-adenosyl-L-methionine: Gly196, Asp219, Asp239, Met240, and Lys253. His257 functions as the Proton acceptor in the catalytic mechanism.

It belongs to the class I-like SAM-binding methyltransferase superfamily. Cation-independent O-methyltransferase family. COMT subfamily. In terms of assembly, homodimer.

The catalysed reaction is a 7-hydroxyisoflavone + S-adenosyl-L-methionine = a 7-methoxyisoflavone + S-adenosyl-L-homocysteine + H(+). The protein operates within phytoalexin biosynthesis; medicarpin biosynthesis. Functionally, transfers a methyl group to 7-hydroxyls of the isoflavones daidzein, genistein and 6,7,4'-trihydroxyisoflavone. Can also methylate (+)6a-hydroxymaackiain with lower efficiency. This is Isoflavone-7-O-methyltransferase 8 from Medicago sativa (Alfalfa).